The primary structure comprises 300 residues: Nicotinate-nucleotide pyrophosphorylase [carboxylating] (300 aa).

The important for hexamer formation stretch occupies residues 5 to 9 (QLLPK). Quinolinate-binding positions include Arg107, 150 to 151 (RK), 172 to 173 (HR), Lys183, Glu213, Asp234, 260 to 262 (SGG), and Gly282.

This sequence belongs to the NadC/ModD family. In terms of assembly, hexamer formed by 3 homodimers.

It catalyses the reaction nicotinate beta-D-ribonucleotide + CO2 + diphosphate = quinolinate + 5-phospho-alpha-D-ribose 1-diphosphate + 2 H(+). It functions in the pathway cofactor biosynthesis; NAD(+) biosynthesis; nicotinate D-ribonucleotide from quinolinate: step 1/1. Involved in the catabolism of quinolinic acid (QA). The sequence is that of Nicotinate-nucleotide pyrophosphorylase [carboxylating] (qprt) from Dictyostelium discoideum (Social amoeba).